Here is a 77-residue protein sequence, read N- to C-terminus: Protein RALF-like 17 (77 aa).

A signal peptide spans 1–29; that stretch reads MAASREFIICCFLTLLLCNFFMRVESGAA. The cysteines at positions 37 and 51 are disulfide-linked.

The protein belongs to the plant rapid alkalinization factor (RALF) family.

The protein localises to the secreted. Functionally, cell signaling peptide that may regulate plant stress, growth, and development. Mediates a rapid alkalinization of extracellular space by mediating a transient increase in the cytoplasmic Ca(2+) concentration leading to a calcium-dependent signaling events through a cell surface receptor and a concomitant activation of some intracellular mitogen-activated protein kinases. This Arabidopsis thaliana (Mouse-ear cress) protein is Protein RALF-like 17 (RALFL17).